We begin with the raw amino-acid sequence, 177 residues long: MDTTQVTLIHQILAAADERNLPLWIGGGWAIDARLGRVTRKHDDIDLTFPGERRGELEAMVEMLGGRVTEELDYGFLAEIGDELLDCEPAWWADEAYEIAEAPQGSCPEAAEGVIAGRPVRCNSWEAIIWDYFYYADEVPPVDWPTKHIESYRLACTSLGAEKVEVLRAAFRSRYAA.

Positions 44, 46, and 86 each coordinate Mg(2+). The active-site Proton acceptor is the Asp86.

Mg(2+) serves as cofactor.

It carries out the reaction nucleoside triphosphate + gentamicin = diphosphate + 2''-nucleotidylgentamicin.. In terms of biological role, mediates bacterial resistance to kanamycin, gentamicin, dibekacin, sisomicin, neomycin and tobramycin by adenylating the 2''-hydroxyl group of these antibiotics. This chain is 2''-aminoglycoside nucleotidyltransferase (aadB), found in Klebsiella pneumoniae.